The chain runs to 131 residues: Con-Ins Q1 (131 aa).

Residues 1 to 24 (MTTSSYFLLVALGLLLYLCQSSFG) form the signal peptide. Intrachain disulfides connect Cys-29–Cys-107, Cys-41–Cys-110, Cys-53–Cys-123, and Cys-109–Cys-114. The propeptide at 59–92 (LQGGTDDARKKRGRASLLRKRRGFLSMLKARAKR) is c peptide. Glu-118 carries the 4-carboxyglutamate; partial modification. Ser-130 carries the serine amide modification.

Belongs to the insulin family. In terms of assembly, heterodimer of A and B chains; disulfide-linked. Expressed by the venom gland.

It localises to the secreted. Its function is as follows. This venom insulin facilitates prey capture by rapidly inducing hypoglycemic shock. Intraperitoneal injection of this peptide into zebrafish lowers blood glucose with the same potency than human insulin. In vivo, when applied to water, this peptide reduces overall locomotor activity of zebrafish larvae, observed as a significant decrease in the percentage of time spent swimming and movement frequency. This Conus quercinus (Oak cone) protein is Con-Ins Q1.